Reading from the N-terminus, the 210-residue chain is Large ribosomal subunit protein bL25 (210 aa).

It belongs to the bacterial ribosomal protein bL25 family. CTC subfamily. Part of the 50S ribosomal subunit; part of the 5S rRNA/L5/L18/L25 subcomplex. Contacts the 5S rRNA. Binds to the 5S rRNA independently of L5 and L18.

In terms of biological role, this is one of the proteins that binds to the 5S RNA in the ribosome where it forms part of the central protuberance. The chain is Large ribosomal subunit protein bL25 from Frankia casuarinae (strain DSM 45818 / CECT 9043 / HFP020203 / CcI3).